Consider the following 166-residue polypeptide: MNYFFSLVLVFLVLSVVVLGVVSAPYQGVVALMGVSFFCCIFMVFLGRTFAALVMYIVYLGGLVVVFGYCVSVEKESGIYSVGGTKYFIVCVSLLLVVLLCLLREVGGLLVYVNWGDLVCLEMNGVGVFYFSGGWGLIVCSWGLLVVLFSILVILSWSRLGGLRPF.

6 helical membrane passes run 4–24, 27–47, 50–70, 82–102, 109–129, and 135–155; these read FFSL…VVSA, QGVV…VFLG, FAAL…FGYC, VGGT…LLCL, LLVY…VGVF, and WGLI…LVIL.

This sequence belongs to the complex I subunit 6 family.

Its subcellular location is the mitochondrion membrane. It carries out the reaction a ubiquinone + NADH + 5 H(+)(in) = a ubiquinol + NAD(+) + 4 H(+)(out). Its function is as follows. Core subunit of the mitochondrial membrane respiratory chain NADH dehydrogenase (Complex I) that is believed to belong to the minimal assembly required for catalysis. Complex I functions in the transfer of electrons from NADH to the respiratory chain. The immediate electron acceptor for the enzyme is believed to be ubiquinone. In Lycodon semicarinatus (Ryukyu odd-tooth snake), this protein is NADH-ubiquinone oxidoreductase chain 6 (MT-ND6).